A 126-amino-acid chain; its full sequence is MKSVLKIRMSAHDAHYGGGLVDGARMLQLFGDVATELLIMNDGDEGLFKAYDMVEFMAPVFAGDYIEVEGSITEQGNTSRKMIFEARKVIVPRTDINDSACDVLETPIVVCRASGTCVVPKDKQRK.

Belongs to the KAL family. As to quaternary structure, homohexamer.

The catalysed reaction is (3S)-3-aminobutanoyl-CoA = (2E)-butenoyl-CoA + NH4(+). It participates in amino-acid degradation; L-lysine degradation via acetate pathway. Functionally, involved in the anaerobic fermentation of lysine. Catalyzes the deamination of L-3-aminobutyryl-CoA to produce crotonoyl-CoA. This is 3-aminobutyryl-CoA ammonia lyase from Acetoanaerobium sticklandii (strain ATCC 12662 / DSM 519 / JCM 1433 / CCUG 9281 / NCIMB 10654 / HF) (Clostridium sticklandii).